Here is a 336-residue protein sequence, read N- to C-terminus: Glyceraldehyde-3-phosphate dehydrogenase (336 aa).

Residues 12–13 (RI), aspartate 34, arginine 78, and threonine 121 each bind NAD(+). Residues 151 to 153 (SCT), threonine 182, arginine 199, 212 to 213 (TG), and arginine 235 each bind D-glyceraldehyde 3-phosphate. Residue cysteine 152 is the Nucleophile of the active site. Residue asparagine 316 participates in NAD(+) binding.

Belongs to the glyceraldehyde-3-phosphate dehydrogenase family. As to quaternary structure, homotetramer.

The protein resides in the cytoplasm. The catalysed reaction is D-glyceraldehyde 3-phosphate + phosphate + NAD(+) = (2R)-3-phospho-glyceroyl phosphate + NADH + H(+). The protein operates within carbohydrate degradation; glycolysis; pyruvate from D-glyceraldehyde 3-phosphate: step 1/5. In terms of biological role, catalyzes the oxidative phosphorylation of glyceraldehyde 3-phosphate (G3P) to 1,3-bisphosphoglycerate (BPG) using the cofactor NAD. The first reaction step involves the formation of a hemiacetal intermediate between G3P and a cysteine residue, and this hemiacetal intermediate is then oxidized to a thioester, with concomitant reduction of NAD to NADH. The reduced NADH is then exchanged with the second NAD, and the thioester is attacked by a nucleophilic inorganic phosphate to produce BPG. The sequence is that of Glyceraldehyde-3-phosphate dehydrogenase (gap) from Streptococcus pyogenes serotype M1.